The primary structure comprises 1165 residues: Pesticidal crystal protein Cry1Da (1165 aa).

Belongs to the delta endotoxin family.

In terms of biological role, promotes colloidosmotic lysis by binding to the midgut epithelial cells of many lepidopteran larvae. This chain is Pesticidal crystal protein Cry1Da (cry1Da), found in Bacillus thuringiensis subsp. aizawai.